A 135-amino-acid chain; its full sequence is uncharacterized protein (135 aa).

The tract at residues 1–36 (MSHAEKPMSDSVNHHHHRTFEVLTAEPVRSRRKPRH) is disordered.

Belongs to the transposase 8 family.

This is an uncharacterized protein from Sinorhizobium fredii (strain NBRC 101917 / NGR234).